A 130-amino-acid chain; its full sequence is Small ribosomal subunit protein uS11 (130 aa).

Residues 108–130 (IEDVTPIPHDGTGRPGGKRGRRV) form a disordered region.

It belongs to the universal ribosomal protein uS11 family. Part of the 30S ribosomal subunit.

Functionally, located on the platform of the 30S subunit. This is Small ribosomal subunit protein uS11 from Methanothermobacter thermautotrophicus (strain ATCC 29096 / DSM 1053 / JCM 10044 / NBRC 100330 / Delta H) (Methanobacterium thermoautotrophicum).